The chain runs to 477 residues: Cysteine--tRNA ligase (477 aa).

Position 42 (C42) interacts with Zn(2+). Residues 44-54 carry the 'HIGH' region motif; sequence ATVQGLPHIGH. Positions 220, 245, and 249 each coordinate Zn(2+). Residues 276–280 carry the 'KMSKS' region motif; the sequence is KMSKS. K279 serves as a coordination point for ATP.

It belongs to the class-I aminoacyl-tRNA synthetase family. As to quaternary structure, monomer. The cofactor is Zn(2+).

The protein localises to the cytoplasm. It carries out the reaction tRNA(Cys) + L-cysteine + ATP = L-cysteinyl-tRNA(Cys) + AMP + diphosphate. This Mycolicibacterium smegmatis (strain ATCC 700084 / mc(2)155) (Mycobacterium smegmatis) protein is Cysteine--tRNA ligase.